The chain runs to 285 residues: 4-diphosphocytidyl-2-C-methyl-D-erythritol kinase (285 aa).

Lysine 10 is a catalytic residue. An ATP-binding site is contributed by 94-104 (PVAAGLGGGSS). Residue aspartate 136 is part of the active site.

It belongs to the GHMP kinase family. IspE subfamily.

It carries out the reaction 4-CDP-2-C-methyl-D-erythritol + ATP = 4-CDP-2-C-methyl-D-erythritol 2-phosphate + ADP + H(+). Its pathway is isoprenoid biosynthesis; isopentenyl diphosphate biosynthesis via DXP pathway; isopentenyl diphosphate from 1-deoxy-D-xylulose 5-phosphate: step 3/6. Its function is as follows. Catalyzes the phosphorylation of the position 2 hydroxy group of 4-diphosphocytidyl-2C-methyl-D-erythritol. This is 4-diphosphocytidyl-2-C-methyl-D-erythritol kinase from Latilactobacillus sakei subsp. sakei (strain 23K) (Lactobacillus sakei subsp. sakei).